The primary structure comprises 271 residues: Glutamate racemase (271 aa).

Residues 12 to 13 and 44 to 45 each bind substrate; these read DS and YG. Cysteine 75 acts as the Proton donor/acceptor in catalysis. Residue 76-77 coordinates substrate; that stretch reads NS. Cysteine 185 serves as the catalytic Proton donor/acceptor. Residue 186–187 participates in substrate binding; sequence TH.

This sequence belongs to the aspartate/glutamate racemases family.

It carries out the reaction L-glutamate = D-glutamate. The protein operates within cell wall biogenesis; peptidoglycan biosynthesis. In terms of biological role, provides the (R)-glutamate required for cell wall biosynthesis. The protein is Glutamate racemase of Mycobacterium bovis (strain BCG / Pasteur 1173P2).